Reading from the N-terminus, the 199-residue chain is Recombination protein RecR (199 aa).

A C4-type zinc finger spans residues 58 to 73 (CVNCGNIGTGDLCEIC). A Toprim domain is found at 81–176 (GEICVVEDVA…TLSSLAQGVP (96 aa)).

This sequence belongs to the RecR family.

Its function is as follows. May play a role in DNA repair. It seems to be involved in an RecBC-independent recombinational process of DNA repair. It may act with RecF and RecO. In Jannaschia sp. (strain CCS1), this protein is Recombination protein RecR.